The sequence spans 234 residues: Glucosamine-6-phosphate deaminase (234 aa).

The Proton acceptor; for enolization step role is filled by Asp62. The For ring-opening step role is filled by Asn128. Residue His130 is the Proton acceptor; for ring-opening step of the active site. The For ring-opening step role is filled by Glu135.

Belongs to the glucosamine/galactosamine-6-phosphate isomerase family. NagB subfamily.

The catalysed reaction is alpha-D-glucosamine 6-phosphate + H2O = beta-D-fructose 6-phosphate + NH4(+). The protein operates within amino-sugar metabolism; N-acetylneuraminate degradation; D-fructose 6-phosphate from N-acetylneuraminate: step 5/5. Its function is as follows. Catalyzes the reversible isomerization-deamination of glucosamine 6-phosphate (GlcN6P) to form fructose 6-phosphate (Fru6P) and ammonium ion. The sequence is that of Glucosamine-6-phosphate deaminase from Streptococcus equi subsp. zooepidemicus (strain H70).